We begin with the raw amino-acid sequence, 35 residues long: MFDTNSTRLPIWGIGCNPWTAEHVDQTLVSGNDIC.

The propeptide occupies M1–P10. Residue I11 is modified to (3R,4R)-4,5-dihydroxyisoleucine; in form alpha-amanitin. I11 carries the (3R,4S)-4-hydroxyisoleucine; in form gamma-amanitin modification. Positions I11–P18 form a cross-link, cyclopeptide (Ile-Pro). Residues W12–C16 constitute a cross-link (2'-cysteinyl-6'-hydroxytryptophan sulfoxide (Trp-Cys)). P18 is subject to 4-hydroxyproline. A propeptide spanning residues W19 to C35 is cleaved from the precursor.

This sequence belongs to the MSDIN fungal toxin family. In terms of processing, processed by the macrocyclase-peptidase enzyme POPB to yield a toxic bicyclic octapeptide. POPB first removes 10 residues from the N-terminus. Conformational trapping of the remaining peptide forces the enzyme to release this intermediate rather than proceed to macrocyclization. The enzyme rebinds the remaining peptide in a different conformation and catalyzes macrocyclization of the N-terminal 8 residues.

In terms of biological role, major toxin belonging to the bicyclic octapeptides amatoxins that acts by binding non-competitively to RNA polymerase II and greatly slowing the elongation of transcripts from target promoters. This Galerina marginata (strain CBS 339.88) protein is Alpha-amanitin proprotein 2.